Reading from the N-terminus, the 116-residue chain is Large ribosomal subunit protein bL19 (116 aa).

The protein belongs to the bacterial ribosomal protein bL19 family.

Functionally, this protein is located at the 30S-50S ribosomal subunit interface and may play a role in the structure and function of the aminoacyl-tRNA binding site. In Pseudomonas fluorescens (strain ATCC BAA-477 / NRRL B-23932 / Pf-5), this protein is Large ribosomal subunit protein bL19.